Reading from the N-terminus, the 178-residue chain is Aspartate carbamoyltransferase regulatory chain (178 aa).

Positions 1–15 are enriched in basic and acidic residues; it reads MNDREPNQKESKESV. The tract at residues 1–23 is disordered; that stretch reads MNDREPNQKESKESVNDAVPRAR. Zn(2+)-binding residues include C133, C138, C159, and C162.

The protein belongs to the PyrI family. Contains catalytic and regulatory chains. Zn(2+) serves as cofactor.

Its function is as follows. Involved in allosteric regulation of aspartate carbamoyltransferase. The polypeptide is Aspartate carbamoyltransferase regulatory chain (Haloquadratum walsbyi (strain DSM 16790 / HBSQ001)).